We begin with the raw amino-acid sequence, 34 residues long: uncharacterized protein (34 aa).

This is an uncharacterized protein from Treponema pallidum (strain Nichols).